The sequence spans 494 residues: Probable cytochrome P450 515A1 (494 aa).

A helical transmembrane segment spans residues 1-21 (MILGIILGLFIYIYLINIKFF). Position 440 (Cys440) interacts with heme.

It belongs to the cytochrome P450 family. The cofactor is heme.

The protein localises to the membrane. This is Probable cytochrome P450 515A1 (cyp515A1) from Dictyostelium discoideum (Social amoeba).